The following is a 178-amino-acid chain: Cyclin-dependent kinase inhibitor 1B (178 aa).

The span at 1 to 11 shows a compositional bias: polar residues; that stretch reads MSNVRVSNGSP. The tract at residues 1–31 is disordered; it reads MSNVRVSNGSPSLERMDARQAEYPKPSACRN. A Phosphoserine; by UHMK1 modification is found at S10. Residues 51-91 are interaction with CDK2; that stretch reads DMEEASQRKWNFDFQNHKPLEGKYEWQEVEKGSLPEFYYRP. Y74 carries the phosphotyrosine; by SRC modification. The tract at residues 87–178 is disordered; the sequence is FYYRPPRPPK…RTEENVSDGS (92 aa). Position 88 is a phosphotyrosine; by ABL, LYN, SRC and JAK2 (Y88). A Phosphotyrosine modification is found at Y89. Polar residues predominate over residues 104–113; it reads QESQDVSGTR. Basic and acidic residues predominate over residues 126 to 137; sequence EDTHLVDQKTDT. The Nuclear localization signal motif lies at 153–169; that stretch reads KRPATDDSSPQNKRANR. Phosphothreonine; by CaMK1, PKB/AKT1, RPS6KA1, RPS6KA3 and PIM1 is present on T157. T170 carries the phosphothreonine modification.

The protein belongs to the CDI family. As to quaternary structure, forms a ternary complex composed of CCNE1, CDK2 and CDKN1B. Interacts directly with CCNE1; the interaction is inhibited by CDK2-dependent phosphorylation. Interacts with COPS5, subunit of the COP9 signalosome complex; the interaction leads to CDKN1B degradation. Interacts with NUP50; the interaction leads to nuclear import and degradation of phosphorylated CDKN1B. Interacts with CCND1 and SNX6. Interacts (Thr-198-phosphorylated form) with 14-3-3 proteins, binds strongly YWHAQ, weakly YWHAE and YWHAH, but not YWHAB nor YWHAZ; the interaction with YWHAQ results in translocation to the cytoplasm. Interacts with AKT1 and LYN; the interactions lead to cytoplasmic mislocation, phosphorylation of CDKN1B and inhibition of cell cycle arrest. Forms a ternary complex with CCNA2 and CDK2; CDKN1B inhibits the kinase activity of CDK2 through conformational rearrangements. Interacts (unphosphorylated form) with CDK2. Forms a complex with CDK2 and SPDYA, but does not directly interact with SPDYA. Forms a ternary complex composed of cyclin D, CDK4 and CDKN1B. Interacts (phosphorylated on Tyr-88 and Tyr-89) with CDK4; the interaction is required for cyclin D and CDK4 complex assembly, induces nuclear translocation and activates the CDK4 kinase activity. Interacts with GRB2. Interacts with PIM1. Identified in a complex with SKP1, SKP2 and CKS1B. Interacts with UHMK1; the interaction leads to cytoplasmic mislocation, phosphorylation of CDKN1B and inhibition of cell cycle arrest. Also interacts with CDK1. Dephosphorylated by PPM1H, leading to CDKN1B stability. Post-translationally, phosphorylated; phosphorylation occurs on serine, threonine and tyrosine residues. Phosphorylation on Ser-10 is the major site of phosphorylation in resting cells, takes place at the G(0)-G(1) phase and leads to protein stability. Phosphorylation on other sites is greatly enhanced by mitogens, growth factors, MYC and in certain cancer cell lines. The phosphorylated form found in the cytoplasm is inactivate. Phosphorylation on Tyr-88 has no effect on binding CDK complexes. In terms of processing, ubiquitinated; in the cytoplasm by the KPC complex (composed of RNF123/KPC1 and UBAC1/KPC2) and, in the nucleus, by SCF(SKP2). The latter requires prior phosphorylation on Thr-187. Ubiquitinated; by a TRIM21-containing SCF(SKP2)-like complex; leads to its degradation. Subject to degradation in the lysosome. Interaction with SNX6 promotes lysosomal degradation.

The protein localises to the nucleus. It is found in the cytoplasm. Its subcellular location is the endosome. Functionally, important regulator of cell cycle progression. Inhibits the kinase activity of CDK2 bound to cyclin A, but has little inhibitory activity on CDK2 bound to SPDYA. Involved in G1 arrest. Potent inhibitor of cyclin E- and cyclin A-CDK2 complexes. Forms a complex with cyclin type D-CDK4 complexes and is involved in the assembly, stability, and modulation of CCND1-CDK4 complex activation. Acts either as an inhibitor or an activator of cyclin type D-CDK4 complexes depending on its phosphorylation state and/or stoichometry. This is Cyclin-dependent kinase inhibitor 1B (CDKN1B) from Neovison vison (American mink).